A 449-amino-acid polypeptide reads, in one-letter code: tRNA (guanine(37)-N(1))-methyltransferase (449 aa).

S-adenosyl-L-methionine contacts are provided by residues H216, 254 to 255 (DL), 282 to 283 (DG), and N345.

The protein belongs to the class I-like SAM-binding methyltransferase superfamily. TRM5/TYW2 family. In terms of assembly, monomer.

The protein resides in the mitochondrion matrix. The protein localises to the nucleus. It localises to the cytoplasm. The catalysed reaction is guanosine(37) in tRNA + S-adenosyl-L-methionine = N(1)-methylguanosine(37) in tRNA + S-adenosyl-L-homocysteine + H(+). Functionally, specifically methylates the N1 position of guanosine-37 in various cytoplasmic and mitochondrial tRNAs. Methylation is not dependent on the nature of the nucleoside 5' of the target nucleoside. This is the first step in the biosynthesis of wybutosine (yW), a modified base adjacent to the anticodon of tRNAs and required for accurate decoding. This chain is tRNA (guanine(37)-N(1))-methyltransferase, found in Candida albicans (strain WO-1) (Yeast).